The chain runs to 34 residues: Phospholipase A2 (34 aa).

His-18 is an active-site residue. Asp-19 contributes to the Ca(2+) binding site.

Belongs to the phospholipase A2 family. Group I subfamily. D49 sub-subfamily. It depends on Ca(2+) as a cofactor. In terms of processing, contains 7 disulfide bonds. In terms of tissue distribution, expressed by the venom gland.

It is found in the secreted. The enzyme catalyses a 1,2-diacyl-sn-glycero-3-phosphocholine + H2O = a 1-acyl-sn-glycero-3-phosphocholine + a fatty acid + H(+). Its function is as follows. Snake venom phospholipase A2 (PLA2) that strongly inhibits platelet aggregation and has a strong anticoagulant activity. PLA2 catalyzes the calcium-dependent hydrolysis of the 2-acyl groups in 3-sn-phosphoglycerides. The sequence is that of Phospholipase A2 from Pseudechis papuanus (Papuan black snake).